An 84-amino-acid chain; its full sequence is MKLLYLFLAILLAIEEPVISGKRHILRRMGNSGICRASCKKNEQPYLYCRNYQSCCLQSYMRISISGKEENTDWSYEKQWPRLP.

The first 21 residues, 1-21, serve as a signal peptide directing secretion; it reads MKLLYLFLAILLAIEEPVISG. Cystine bridges form between Cys35–Cys49 and Cys39–Cys56.

Belongs to the beta-defensin family.

It localises to the secreted. In terms of biological role, has antibacterial activity. In Pan troglodytes (Chimpanzee), this protein is Beta-defensin 119 (DEFB119).